We begin with the raw amino-acid sequence, 551 residues long: Solute carrier family 22 member 4 (551 aa).

Topologically, residues 1–20 (MRDYDEAIAFLGEWGPFQRL) are cytoplasmic. The helical transmembrane segment at 21–41 (IFFLLSASIIPNGFNGMSVVF) threads the bilayer. Residues 42 to 141 (LAGTPEHRCR…WNLVCEDNWK (100 aa)) lie on the Extracellular side of the membrane. N-linked (GlcNAc...) asparagine glycans are attached at residues Asn57, Asn64, and Asn91. The helical transmembrane segment at 142–162 (VPLTTSLFFVGVLLGSFVSGQ) threads the bilayer. Over 163 to 171 (LSDRFGRKN) the chain is Cytoplasmic. A helical membrane pass occupies residues 172-192 (VLFATMAVQTGFSFLQIFSIS). At 193 to 197 (WEMFT) the chain is on the extracellular side. A helical transmembrane segment spans residues 198 to 218 (VLFLIVGMGQISNYVVAFILG). 218–225 (GTEILGKS) contacts ATP. At 219–232 (TEILGKSVRIIFST) the chain is on the cytoplasmic side. Residues 233 to 253 (LGVCTFFAVGYMLLPLFAYFI) form a helical membrane-spanning segment. Topologically, residues 254–257 (RDWR) are extracellular. The helical transmembrane segment at 258–278 (MLLLALTVPGVLCVPLWWFIP) threads the bilayer. The Cytoplasmic segment spans residues 279-337 (ESPRWLISQRRFREAEDIIQKAAKMNNIAVPAVIFDSVEELNPLKQQKAFILDLFRTWN). The chain crosses the membrane as a helical span at residues 338 to 358 (IAIMTIMSLLLWMLTSVGYFA). Residues 359-371 (LSLDTPNLHGDAY) are Extracellular-facing. Residues 372–392 (LNCFLSALIEIPAYITAWLLL) traverse the membrane as a helical segment. The Cytoplasmic portion of the chain corresponds to 393–399 (RTLPRRY). Residues 400-420 (IIAAVLFWGGGVLLFIQLVPV) form a helical membrane-spanning segment. The Extracellular portion of the chain corresponds to 421–426 (DYYFLS). Residues 427 to 447 (IGLVMLGKFGITSAFSMLYVF) form a helical membrane-spanning segment. Residues 448-460 (TAELYPTMVRNMA) are Cytoplasmic-facing. The chain crosses the membrane as a helical span at residues 461 to 481 (VGVTSMASRVGSIIAPYFVYL). Over 482–486 (GAYNR) the chain is Extracellular. A helical transmembrane segment spans residues 487–507 (MLPYIVMGSLTVLIGILTLFF). Over 508 to 551 (PESLGMTLPETLEQMQKVKWFRSGKKTRDSMETEENPKVLITAF) the chain is Cytoplasmic.

Belongs to the major facilitator (TC 2.A.1) superfamily. Organic cation transporter (TC 2.A.1.19) family. In terms of assembly, interacts with PDZK1.

Its subcellular location is the apical cell membrane. It localises to the basal cell membrane. It is found in the mitochondrion membrane. It carries out the reaction ergothioneine(out) + Na(+)(out) = ergothioneine(in) + Na(+)(in). The enzyme catalyses acetylcholine(in) = acetylcholine(out). It catalyses the reaction (R)-carnitine(out) + Na(+)(out) = (R)-carnitine(in) + Na(+)(in). The catalysed reaction is glycine betaine(out) + Na(+)(out) = glycine betaine(in) + Na(+)(in). With respect to regulation, allosterically activated by intracellular ATP. In terms of biological role, transporter that mediates the transport of endogenous and microbial zwitterions and organic cations. Functions as a Na(+)-dependent and pH-dependent high affinity microbial symporter of potent food-derived antioxidant ergothioeine. Transports one sodium ion with one ergothioeine molecule. Involved in the absorption of ergothioneine from the luminal/apical side of the small intestine and renal tubular cells, and into non-parenchymal liver cells, thereby contributing to maintain steady-state ergothioneine level in the body. Also mediates the bidirectional transport of acetycholine, although the exact transport mechanism has not been fully identified yet. Most likely exports anti-inflammatory acetylcholine in non-neuronal tissues, thereby contributing to the non-neuronal cholinergic system. Displays a general physiological role linked to better survival by controlling inflammation and oxidative stress, which may be related to ergothioneine and acetycholine transports. May also function as a low-affinity Na(+)-dependent transporter of L-carnitine through the mitochondrial membrane, thereby maintaining intracellular carnitine homeostasis. May contribute to regulate the transport of cationic compounds in testis across the blood-testis-barrier. The polypeptide is Solute carrier family 22 member 4 (SLC22A4) (Papio anubis (Olive baboon)).